Reading from the N-terminus, the 264-residue chain is Glutamate racemase (264 aa).

Substrate-binding positions include 10–11 and 42–43; these read DS and YG. Cys73 serves as the catalytic Proton donor/acceptor. 74 to 75 contributes to the substrate binding site; it reads NT. The active-site Proton donor/acceptor is the Cys183. Substrate is bound at residue 184–185; the sequence is TH.

The protein belongs to the aspartate/glutamate racemases family.

The catalysed reaction is L-glutamate = D-glutamate. The protein operates within cell wall biogenesis; peptidoglycan biosynthesis. In terms of biological role, provides the (R)-glutamate required for cell wall biosynthesis. The polypeptide is Glutamate racemase (Streptococcus sanguinis (strain SK36)).